The following is a 480-amino-acid chain: Outer capsid protein VP5 (480 aa).

The tract at residues 1 to 48 (MTSKRLGARFPGFLNRIGSGITRAARSDTTKRIPSAAGRAVERVAASE) is involved in membrane permeabilization.

Belongs to the orbivirus VP5 family.

The protein resides in the virion. Functionally, VP5 protein is one of the two proteins (with VP2) which constitute the virus particle outer capsid. Acts as a membrane permeabilization protein that mediates release of viral particles from endosomal compartments into the cytoplasm. Permeabilization activity is probably negatively regulated by VP2 and is triggered by endosomal degradation of VP2 and exposure to low pH. This Ixodes (gulls) protein is Outer capsid protein VP5 (Segment-6).